A 179-amino-acid chain; its full sequence is MSILPIVIAPDERLITRASEVTDINDKIKELVNDMFETMYDAEGLGLAAVQVGVLKRIFVMDIQLETIENEPAGYGSTGKFYMINPEITELSDEQVILKEGCLSIPEQSHEIKRPKYLTVKYKDLDNEEQTLKASGWLARCIQHELDHLNGILYIRHLSKLKYDMAMKKAQKVKKHYEQ.

The Fe cation site is built by C102 and H144. Residue E145 is part of the active site. Residue H148 participates in Fe cation binding.

The protein belongs to the polypeptide deformylase family. Fe(2+) is required as a cofactor.

It catalyses the reaction N-terminal N-formyl-L-methionyl-[peptide] + H2O = N-terminal L-methionyl-[peptide] + formate. In terms of biological role, removes the formyl group from the N-terminal Met of newly synthesized proteins. Requires at least a dipeptide for an efficient rate of reaction. N-terminal L-methionine is a prerequisite for activity but the enzyme has broad specificity at other positions. The sequence is that of Peptide deformylase from Wolbachia pipientis wMel.